The primary structure comprises 305 residues: Ribosomal RNA large subunit methyltransferase F (305 aa).

This sequence belongs to the methyltransferase superfamily. METTL16/RlmF family.

Its subcellular location is the cytoplasm. It carries out the reaction adenosine(1618) in 23S rRNA + S-adenosyl-L-methionine = N(6)-methyladenosine(1618) in 23S rRNA + S-adenosyl-L-homocysteine + H(+). Functionally, specifically methylates the adenine in position 1618 of 23S rRNA. The protein is Ribosomal RNA large subunit methyltransferase F of Bacteroides fragilis (strain YCH46).